A 206-amino-acid polypeptide reads, in one-letter code: Small ribosomal subunit protein uS4 (206 aa).

An S4 RNA-binding domain is found at 96–156 (TRLDNVVYRM…EKSRTQARIK (61 aa)).

Belongs to the universal ribosomal protein uS4 family. As to quaternary structure, part of the 30S ribosomal subunit. Contacts protein S5. The interaction surface between S4 and S5 is involved in control of translational fidelity.

One of the primary rRNA binding proteins, it binds directly to 16S rRNA where it nucleates assembly of the body of the 30S subunit. Its function is as follows. With S5 and S12 plays an important role in translational accuracy. This chain is Small ribosomal subunit protein uS4, found in Shewanella denitrificans (strain OS217 / ATCC BAA-1090 / DSM 15013).